The chain runs to 224 residues: Glycerol-3-phosphate acyltransferase (224 aa).

6 consecutive transmembrane segments (helical) span residues 4–24 (FVIVLINLAFCLGAYLFGSIN), 60–80 (LVIFALDILKTYLASLLVYFV), 88–108 (SVVVFHAVAYCVVIGHIFPIW), 124–144 (IISVNIIIAVIGAIVYLLIII), 149–169 (IVSFTTLITIPSLLPLMFIPW), and 182–202 (WPWWISPLVYVLIILLVIWSH).

It belongs to the PlsY family. Probably interacts with PlsX.

Its subcellular location is the cell membrane. The catalysed reaction is an acyl phosphate + sn-glycerol 3-phosphate = a 1-acyl-sn-glycero-3-phosphate + phosphate. It participates in lipid metabolism; phospholipid metabolism. Its function is as follows. Catalyzes the transfer of an acyl group from acyl-phosphate (acyl-PO(4)) to glycerol-3-phosphate (G3P) to form lysophosphatidic acid (LPA). This enzyme utilizes acyl-phosphate as fatty acyl donor, but not acyl-CoA or acyl-ACP. The polypeptide is Glycerol-3-phosphate acyltransferase (Mycoplasmopsis pulmonis (strain UAB CTIP) (Mycoplasma pulmonis)).